A 391-amino-acid polypeptide reads, in one-letter code: Glutamate 5-kinase (391 aa).

Position 17 (Lys17) interacts with ATP. Substrate contacts are provided by Ser57, Asp144, and Asn156. ATP is bound by residues Ser176–Asp177 and Thr216–Lys222. The region spanning Gln278 to Ala356 is the PUA domain. Residues Ser370–Ser391 are disordered. Residues Ser378–Ser391 show a composition bias toward polar residues.

This sequence belongs to the glutamate 5-kinase family.

The protein resides in the cytoplasm. The catalysed reaction is L-glutamate + ATP = L-glutamyl 5-phosphate + ADP. Its pathway is amino-acid biosynthesis; L-proline biosynthesis; L-glutamate 5-semialdehyde from L-glutamate: step 1/2. In terms of biological role, catalyzes the transfer of a phosphate group to glutamate to form L-glutamate 5-phosphate. This Cutibacterium acnes (strain DSM 16379 / KPA171202) (Propionibacterium acnes) protein is Glutamate 5-kinase.